A 231-amino-acid polypeptide reads, in one-letter code: Sec-independent protein translocase protein TatB (231 aa).

The helical transmembrane segment at methionine 1–glycine 21 threads the bilayer. The interval methionine 77–alanine 168 is disordered. Residues alanine 101–proline 111 show a composition bias toward basic and acidic residues. Residues serine 148 to asparagine 157 are compositionally biased toward polar residues.

It belongs to the TatB family. In terms of assembly, the Tat system comprises two distinct complexes: a TatABC complex, containing multiple copies of TatA, TatB and TatC subunits, and a separate TatA complex, containing only TatA subunits. Substrates initially bind to the TatABC complex, which probably triggers association of the separate TatA complex to form the active translocon.

It is found in the cell inner membrane. Functionally, part of the twin-arginine translocation (Tat) system that transports large folded proteins containing a characteristic twin-arginine motif in their signal peptide across membranes. Together with TatC, TatB is part of a receptor directly interacting with Tat signal peptides. TatB may form an oligomeric binding site that transiently accommodates folded Tat precursor proteins before their translocation. In Psychrobacter cryohalolentis (strain ATCC BAA-1226 / DSM 17306 / VKM B-2378 / K5), this protein is Sec-independent protein translocase protein TatB.